Consider the following 89-residue polypeptide: uncharacterized protein (89 aa).

Residues 39–61 (FVCFWSIWFWTGDISFSLLSMLV) traverse the membrane as a helical segment.

It localises to the membrane. This is an uncharacterized protein from Saccharomyces cerevisiae (strain ATCC 204508 / S288c) (Baker's yeast).